A 640-amino-acid chain; its full sequence is Phosphomethylpyrimidine synthase (640 aa).

Residues asparagine 235, methionine 264, tyrosine 293, histidine 329, 349–351, 390–393, and glutamate 429 each bind substrate; these read SRG and DGLR. Histidine 433 contacts Zn(2+). Tyrosine 456 serves as a coordination point for substrate. Histidine 497 is a Zn(2+) binding site. Residues cysteine 577, cysteine 580, and cysteine 585 each contribute to the [4Fe-4S] cluster site.

The protein belongs to the ThiC family. As to quaternary structure, homodimer. [4Fe-4S] cluster serves as cofactor.

It carries out the reaction 5-amino-1-(5-phospho-beta-D-ribosyl)imidazole + S-adenosyl-L-methionine = 4-amino-2-methyl-5-(phosphooxymethyl)pyrimidine + CO + 5'-deoxyadenosine + formate + L-methionine + 3 H(+). It functions in the pathway cofactor biosynthesis; thiamine diphosphate biosynthesis. In terms of biological role, catalyzes the synthesis of the hydroxymethylpyrimidine phosphate (HMP-P) moiety of thiamine from aminoimidazole ribotide (AIR) in a radical S-adenosyl-L-methionine (SAM)-dependent reaction. This Photobacterium profundum (strain SS9) protein is Phosphomethylpyrimidine synthase.